Here is a 437-residue protein sequence, read N- to C-terminus: Cobyrinate a,c-diamide synthase (437 aa).

Residues I243–G433 enclose the GATase cobBQ-type domain. The Nucleophile role is filled by C324.

Belongs to the CobB/CbiA family. The cofactor is Mg(2+).

It catalyses the reaction cob(II)yrinate + 2 L-glutamine + 2 ATP + 2 H2O = cob(II)yrinate a,c diamide + 2 L-glutamate + 2 ADP + 2 phosphate + 2 H(+). Its pathway is cofactor biosynthesis; adenosylcobalamin biosynthesis; cob(II)yrinate a,c-diamide from sirohydrochlorin (anaerobic route): step 10/10. Catalyzes the ATP-dependent amidation of the two carboxylate groups at positions a and c of cobyrinate, using either L-glutamine or ammonia as the nitrogen source. This Sulfurisphaera tokodaii (strain DSM 16993 / JCM 10545 / NBRC 100140 / 7) (Sulfolobus tokodaii) protein is Cobyrinate a,c-diamide synthase.